A 298-amino-acid chain; its full sequence is Methylsterol monooxygenase 1-1 (298 aa).

3 helical membrane-spanning segments follow: residues 42–62 (ILFL…VELA), 96–116 (FILV…MIEI), and 118–138 (SGLP…YFLI). Residues 132–267 (LVVYFLIEDY…FTYCDYIYGT (136 aa)) enclose the Fatty acid hydroxylase domain. A Histidine box-1 motif is present at residues 147-151 (HRFFH). A Histidine box-2 motif is present at residues 160 to 164 (HRVHH). The chain crosses the membrane as a helical span at residues 189–209 (TFMGPAIAPGHMITFWLWIAL). The Histidine box-3 motif lies at 239 to 245 (YHDYHHY).

This sequence belongs to the sterol desaturase family. Interacts with ACBP1. It depends on Fe cation as a cofactor. Expressed in rosettes, stems, roots, floral buds, flowers and siliques.

Its subcellular location is the endoplasmic reticulum membrane. The enzyme catalyses 4,4-dimethyl-5alpha-cholest-7-en-3beta-ol + 6 Fe(II)-[cytochrome b5] + 3 O2 + 5 H(+) = 4alpha-carboxy-4beta-methyl-5alpha-cholest-7-ene-3beta-ol + 6 Fe(III)-[cytochrome b5] + 4 H2O. It carries out the reaction 24-methylenecycloartanol + 6 Fe(II)-[cytochrome b5] + 3 O2 + 5 H(+) = 4alpha-carboxy-4beta,14alpha-dimethyl-9beta,19-cyclo-5alpha-ergost-24(24(1))-en-3beta-ol + 6 Fe(III)-[cytochrome b5] + 4 H2O. Functionally, non-heme iron oxygenase involved in sterols biosynthesis by catalyzing the removal of the first methyl group at the C-4 position. 4,4-dimethyl-9-beta,19-cyclopropylsterols such as 24-methylenecycloartanol are the preferred substrates. Acts as a rate-limiting enzyme in the sterol pathway via interaction with ACBP1; sterols serve as lipid modulators for gene expression of homeodomain-leucine zipper IV transcription factors. Together with SMO1-2, involved in the maintenance of sterol composition to balance auxin and cytokinin activities during embryogenesis. In Arabidopsis thaliana (Mouse-ear cress), this protein is Methylsterol monooxygenase 1-1.